A 285-amino-acid polypeptide reads, in one-letter code: RING finger protein 223 (285 aa).

The segment at 81–132 (CSICFSGYDNIFKTPKELSCSHVFCLECLARLAAAQPAGRSGREAVPCPFCR) adopts an RING-type zinc-finger fold. Residues 230–250 (VALVSVLLLVLFCVILWPVQC) form a helical membrane-spanning segment.

It is found in the membrane. This Mus musculus (Mouse) protein is RING finger protein 223 (Rnf223).